We begin with the raw amino-acid sequence, 431 residues long: Adenylosuccinate synthetase (431 aa).

GTP is bound by residues 12–18 (GDEGKGK) and 40–42 (GHT). Asp13 serves as the catalytic Proton acceptor. Residues Asp13 and Gly40 each contribute to the Mg(2+) site. IMP contacts are provided by residues 13–16 (DEGK), 38–41 (NAGH), Thr128, Arg142, Gln223, Thr238, and Arg301. Catalysis depends on His41, which acts as the Proton donor. 297–303 (TVTGRPR) serves as a coordination point for substrate. Residues Arg303, 329–331 (SID), and 411–413 (SVG) each bind GTP.

This sequence belongs to the adenylosuccinate synthetase family. Homodimer. Mg(2+) is required as a cofactor.

It localises to the cytoplasm. It catalyses the reaction IMP + L-aspartate + GTP = N(6)-(1,2-dicarboxyethyl)-AMP + GDP + phosphate + 2 H(+). The protein operates within purine metabolism; AMP biosynthesis via de novo pathway; AMP from IMP: step 1/2. Functionally, plays an important role in the de novo pathway of purine nucleotide biosynthesis. Catalyzes the first committed step in the biosynthesis of AMP from IMP. The protein is Adenylosuccinate synthetase of Lacticaseibacillus paracasei (strain ATCC 334 / BCRC 17002 / CCUG 31169 / CIP 107868 / KCTC 3260 / NRRL B-441) (Lactobacillus paracasei).